The sequence spans 208 residues: AN1-type zinc finger protein 6 (208 aa).

The segment at 8–42 (SQVPMLCSTGCGFYGNPRTNGMCSVCYKEHLQRQN) adopts an A20-type zinc-finger fold. Zn(2+) is bound by residues Cys-14, Cys-18, Cys-30, and Cys-33. Positions 41–68 (QNSSNGRISPPATSVSSLSESLPVQCTD) are enriched in polar residues. The tract at residues 41–140 (QNSSNGRISP…PSEEQSKSLE (100 aa)) is disordered. Ser-49 bears the Phosphoserine mark. Positions 80 to 94 (STSSSMQPSPVSNQS) are enriched in low complexity. Composition is skewed to polar residues over residues 95–110 (LLSE…STSV) and 120–133 (VQAS…QPSE). The segment at 143-189 (KQKKNRCFMCRKKVGLTGFECRCGNVYCGVHRYSDVHNCSYNYKADA) adopts an AN1-type zinc-finger fold. Cys-149, Cys-152, Cys-163, Cys-165, Cys-170, His-173, His-179, and Cys-181 together coordinate Zn(2+). Lys-204 is modified (N6-acetyllysine).

Interacts with PKN1. Interacts with TRAF2. Interacts with mono- and polyubiquitin. Interacts with PEX6. Interacts with PEX5 (Cys-linked ubiquitinated). As to expression, widely expressed with high level in heart, skeletal muscle, liver, kidney and placenta.

It localises to the cytoplasm. Its function is as follows. Involved in regulation of TNF-alpha induced NF-kappa-B activation and apoptosis. Involved in modulation of 'Lys-48'-linked polyubiquitination status of TRAF2 and decreases association of TRAF2 with RIPK1. Required for PTS1 target sequence-dependent protein import into peroxisomes and PEX5 stability; may cooperate with PEX6. In vitro involved in PEX5 export from the cytosol to peroxisomes. The protein is AN1-type zinc finger protein 6 (ZFAND6) of Homo sapiens (Human).